The sequence spans 263 residues: Granzyme K (263 aa).

The N-terminal stretch at 1 to 21 (MRFSSWALVSLVAGVYMSSEC) is a signal peptide. The propeptide at 22–25 (FHTE) is activation peptide. The Peptidase S1 domain occupies 26–258 (IIGGREVQPH…YQTWIKSKLA (233 aa)). Cysteine 51 and cysteine 67 are joined by a disulfide. Catalysis depends on charge relay system residues histidine 66 and aspartate 115. 3 disulfides stabilise this stretch: cysteine 148-cysteine 219, cysteine 180-cysteine 198, and cysteine 209-cysteine 233. Serine 213 acts as the Charge relay system in catalysis.

This sequence belongs to the peptidase S1 family. Granzyme subfamily.

The protein localises to the cytoplasmic granule. This chain is Granzyme K (Gzmk), found in Mus musculus (Mouse).